Here is a 241-residue protein sequence, read N- to C-terminus: Ribonuclease PH (241 aa).

Residues arginine 86 and 124–126 (GTR) each bind phosphate.

It belongs to the RNase PH family. In terms of assembly, homohexameric ring arranged as a trimer of dimers.

It carries out the reaction tRNA(n+1) + phosphate = tRNA(n) + a ribonucleoside 5'-diphosphate. Its function is as follows. Phosphorolytic 3'-5' exoribonuclease that plays an important role in tRNA 3'-end maturation. Removes nucleotide residues following the 3'-CCA terminus of tRNAs; can also add nucleotides to the ends of RNA molecules by using nucleoside diphosphates as substrates, but this may not be physiologically important. Probably plays a role in initiation of 16S rRNA degradation (leading to ribosome degradation) during starvation. The chain is Ribonuclease PH from Hamiltonella defensa subsp. Acyrthosiphon pisum (strain 5AT).